Consider the following 315-residue polypeptide: Homoserine kinase (315 aa).

Residue 97–107 (PPARGLGSSAT) coordinates ATP.

Belongs to the GHMP kinase family. Homoserine kinase subfamily.

Its subcellular location is the cytoplasm. The catalysed reaction is L-homoserine + ATP = O-phospho-L-homoserine + ADP + H(+). Its pathway is amino-acid biosynthesis; L-threonine biosynthesis; L-threonine from L-aspartate: step 4/5. Its function is as follows. Catalyzes the ATP-dependent phosphorylation of L-homoserine to L-homoserine phosphate. The chain is Homoserine kinase from Prochlorococcus marinus (strain SARG / CCMP1375 / SS120).